Consider the following 229-residue polypeptide: Orotidine 5'-phosphate decarboxylase (229 aa).

Substrate-binding positions include D10, K32, 59-68 (DLKFHDIPNT), T119, R180, Q189, G209, and R210. The active-site Proton donor is the K61.

This sequence belongs to the OMP decarboxylase family. Type 1 subfamily. In terms of assembly, homodimer.

It carries out the reaction orotidine 5'-phosphate + H(+) = UMP + CO2. It participates in pyrimidine metabolism; UMP biosynthesis via de novo pathway; UMP from orotate: step 2/2. Its function is as follows. Catalyzes the decarboxylation of orotidine 5'-monophosphate (OMP) to uridine 5'-monophosphate (UMP). The protein is Orotidine 5'-phosphate decarboxylase of Legionella pneumophila (strain Paris).